A 448-amino-acid polypeptide reads, in one-letter code: Argininosuccinate synthase (448 aa).

Residues 17-25 (AFSGGLDTS) and Ala43 contribute to the ATP site. Tyr99 lines the L-citrulline pocket. Gly129 and Thr131 together coordinate ATP. L-aspartate-binding residues include Thr131, Asn135, and Asp136. An L-citrulline-binding site is contributed by Asn135. Asp136 lines the ATP pocket. Positions 139 and 192 each coordinate L-citrulline. Asp194 serves as a coordination point for ATP. Thr201, Glu203, and Glu280 together coordinate L-citrulline.

It belongs to the argininosuccinate synthase family. Type 2 subfamily. In terms of assembly, homotetramer.

The protein resides in the cytoplasm. The catalysed reaction is L-citrulline + L-aspartate + ATP = 2-(N(omega)-L-arginino)succinate + AMP + diphosphate + H(+). The protein operates within amino-acid biosynthesis; L-arginine biosynthesis; L-arginine from L-ornithine and carbamoyl phosphate: step 2/3. The polypeptide is Argininosuccinate synthase (Acidovorax ebreus (strain TPSY) (Diaphorobacter sp. (strain TPSY))).